The primary structure comprises 243 residues: Ribonuclease 3 (243 aa).

The 137-residue stretch at isoleucine 10–glycine 146 folds into the RNase III domain. Glutamate 59 is a binding site for Mg(2+). The active site involves aspartate 63. Mg(2+) is bound by residues aspartate 132 and glutamate 135. The active site involves glutamate 135. The region spanning aspartate 172 to glutamine 241 is the DRBM domain. The span at glycine 219–alanine 231 shows a compositional bias: basic and acidic residues. The segment at glycine 219 to lysine 243 is disordered.

The protein belongs to the ribonuclease III family. In terms of assembly, homodimer. Requires Mg(2+) as cofactor.

It localises to the cytoplasm. It catalyses the reaction Endonucleolytic cleavage to 5'-phosphomonoester.. Functionally, digests double-stranded RNA. Involved in the processing of primary rRNA transcript to yield the immediate precursors to the large and small rRNAs (23S and 16S). Processes some mRNAs, and tRNAs when they are encoded in the rRNA operon. Processes pre-crRNA and tracrRNA of type II CRISPR loci if present in the organism. The chain is Ribonuclease 3 from Staphylococcus aureus (strain bovine RF122 / ET3-1).